The following is a 129-amino-acid chain: Glycine cleavage system H protein (129 aa).

One can recognise a Lipoyl-binding domain in the interval 24–106; sequence IAVIGITAYA…YGDGWLIKVR (83 aa). The residue at position 65 (Lys65) is an N6-lipoyllysine.

It belongs to the GcvH family. As to quaternary structure, the glycine cleavage system is composed of four proteins: P, T, L and H. (R)-lipoate is required as a cofactor.

Its function is as follows. The glycine cleavage system catalyzes the degradation of glycine. The H protein shuttles the methylamine group of glycine from the P protein to the T protein. The sequence is that of Glycine cleavage system H protein from Synechococcus sp. (strain JA-2-3B'a(2-13)) (Cyanobacteria bacterium Yellowstone B-Prime).